Consider the following 539-residue polypeptide: CTP synthase (539 aa).

An amidoligase domain region spans residues 1–267 (MTKYIFVTGG…DQKVCDFLHI (267 aa)). Residue Ser-13 coordinates CTP. Position 13 (Ser-13) interacts with UTP. 14-19 (SLGKGI) is an ATP binding site. Tyr-54 contacts L-glutamine. An ATP-binding site is contributed by Asp-71. Mg(2+) is bound by residues Asp-71 and Glu-141. Residues 148–150 (DME), 188–193 (KTKPTQ), and Lys-224 contribute to the CTP site. Residues 188–193 (KTKPTQ) and Lys-224 each bind UTP. Residues 294 to 537 (KITLVGKYVE…IGAASGLPEQ (244 aa)) form the Glutamine amidotransferase type-1 domain. Position 356 (Gly-356) interacts with L-glutamine. The active-site Nucleophile; for glutamine hydrolysis is the Cys-383. Residues 384–387 (LGMQ), Glu-407, and Arg-465 each bind L-glutamine. Active-site residues include His-510 and Glu-512.

This sequence belongs to the CTP synthase family. Homotetramer.

The enzyme catalyses UTP + L-glutamine + ATP + H2O = CTP + L-glutamate + ADP + phosphate + 2 H(+). It carries out the reaction L-glutamine + H2O = L-glutamate + NH4(+). The catalysed reaction is UTP + NH4(+) + ATP = CTP + ADP + phosphate + 2 H(+). It functions in the pathway pyrimidine metabolism; CTP biosynthesis via de novo pathway; CTP from UDP: step 2/2. Allosterically activated by GTP, when glutamine is the substrate; GTP has no effect on the reaction when ammonia is the substrate. The allosteric effector GTP functions by stabilizing the protein conformation that binds the tetrahedral intermediate(s) formed during glutamine hydrolysis. Inhibited by the product CTP, via allosteric rather than competitive inhibition. Functionally, catalyzes the ATP-dependent amination of UTP to CTP with either L-glutamine or ammonia as the source of nitrogen. Regulates intracellular CTP levels through interactions with the four ribonucleotide triphosphates. In Lactobacillus helveticus (strain DPC 4571), this protein is CTP synthase.